A 257-amino-acid chain; its full sequence is Hydroxyacylglutathione hydrolase (257 aa).

Zn(2+) contacts are provided by H54, H56, D58, H59, H113, D137, and H175.

It belongs to the metallo-beta-lactamase superfamily. Glyoxalase II family. Monomer. Requires Zn(2+) as cofactor.

The catalysed reaction is an S-(2-hydroxyacyl)glutathione + H2O = a 2-hydroxy carboxylate + glutathione + H(+). It functions in the pathway secondary metabolite metabolism; methylglyoxal degradation; (R)-lactate from methylglyoxal: step 2/2. Thiolesterase that catalyzes the hydrolysis of S-D-lactoyl-glutathione to form glutathione and D-lactic acid. The protein is Hydroxyacylglutathione hydrolase of Trichodesmium erythraeum (strain IMS101).